The chain runs to 272 residues: Ribonuclease HII (272 aa).

The region spanning 87 to 272 (KYVAGVDEVG…HRMSFLKNIL (186 aa)) is the RNase H type-2 domain. The a divalent metal cation site is built by Asp93, Glu94, and Asp188.

It belongs to the RNase HII family. Mn(2+) is required as a cofactor. It depends on Mg(2+) as a cofactor.

Its subcellular location is the cytoplasm. The catalysed reaction is Endonucleolytic cleavage to 5'-phosphomonoester.. Endonuclease that specifically degrades the RNA of RNA-DNA hybrids. This Clostridium perfringens (strain ATCC 13124 / DSM 756 / JCM 1290 / NCIMB 6125 / NCTC 8237 / Type A) protein is Ribonuclease HII.